Here is a 1095-residue protein sequence, read N- to C-terminus: DNA-directed RNA polymerase subunit beta (1095 aa).

A disordered region spans residues 1069-1095 (DLMQDVNPRRSTPSRPTYESLGKEYEE).

Belongs to the RNA polymerase beta chain family. As to quaternary structure, in cyanobacteria the RNAP catalytic core is composed of 2 alpha, 1 beta, 1 beta', 1 gamma and 1 omega subunit. When a sigma factor is associated with the core the holoenzyme is formed, which can initiate transcription.

The enzyme catalyses RNA(n) + a ribonucleoside 5'-triphosphate = RNA(n+1) + diphosphate. Its function is as follows. DNA-dependent RNA polymerase catalyzes the transcription of DNA into RNA using the four ribonucleoside triphosphates as substrates. The chain is DNA-directed RNA polymerase subunit beta from Prochlorococcus marinus (strain NATL1A).